A 1118-amino-acid polypeptide reads, in one-letter code: Error-prone DNA polymerase (1118 aa).

A disordered region spans residues 1071–1118 (GPQPMGYAKEVGSDRRSRPEIGNAPARQDLATLSEEAEQVMPKGRNFQ).

This sequence belongs to the DNA polymerase type-C family. DnaE2 subfamily.

Its subcellular location is the cytoplasm. It catalyses the reaction DNA(n) + a 2'-deoxyribonucleoside 5'-triphosphate = DNA(n+1) + diphosphate. DNA polymerase involved in damage-induced mutagenesis and translesion synthesis (TLS). It is not the major replicative DNA polymerase. This is Error-prone DNA polymerase from Mesorhizobium japonicum (strain LMG 29417 / CECT 9101 / MAFF 303099) (Mesorhizobium loti (strain MAFF 303099)).